Reading from the N-terminus, the 452-residue chain is tRNA modification GTPase MnmE (452 aa).

(6S)-5-formyl-5,6,7,8-tetrahydrofolate-binding residues include Arg-21, Glu-78, and Lys-118. Positions 214–375 constitute a TrmE-type G domain; sequence GMKVVIAGRP…LREHLKQAMG (162 aa). Asn-224 contacts K(+). Residues 224–229, 243–249, and 268–271 contribute to the GTP site; these read NAGKSS, TDIAGTT, and DTAG. Position 228 (Ser-228) interacts with Mg(2+). K(+)-binding residues include Thr-243, Ile-245, and Thr-248. Position 249 (Thr-249) interacts with Mg(2+). Lys-452 serves as a coordination point for (6S)-5-formyl-5,6,7,8-tetrahydrofolate.

This sequence belongs to the TRAFAC class TrmE-Era-EngA-EngB-Septin-like GTPase superfamily. TrmE GTPase family. As to quaternary structure, homodimer. Heterotetramer of two MnmE and two MnmG subunits. K(+) serves as cofactor.

The protein localises to the cytoplasm. Its function is as follows. Exhibits a very high intrinsic GTPase hydrolysis rate. Involved in the addition of a carboxymethylaminomethyl (cmnm) group at the wobble position (U34) of certain tRNAs, forming tRNA-cmnm(5)s(2)U34. The chain is tRNA modification GTPase MnmE from Haemophilus influenzae (strain ATCC 51907 / DSM 11121 / KW20 / Rd).